Reading from the N-terminus, the 1095-residue chain is Formin-like protein 2 (1095 aa).

The 447-residue stretch at 23-469 (LPMPEPGELE…EAIQRQSTLE (447 aa)) folds into the GBD/FH3 domain. The stretch at 381-478 (LLEDAETKNA…EKKIHELEKQ (98 aa)) forms a coiled coil. Residues 521 to 602 (PSSGPLPPPP…PSAPPLPGTS (82 aa)) are disordered. Pro residues-rich tracts occupy residues 524-534 (GPLPPPPPPLP), 548-576 (ATPP…PLPG), and 583-599 (PAPP…PPLP). The region spanning 617 to 1008 (IKKPIKTKFR…LMEKLLEQEA (392 aa)) is the FH2 domain.

It belongs to the formin homology family. Interacts with TCP11L2; this interaction promotes muscle-derived satellite cell (MDSC) migration and differentiation.

It is found in the cytoplasm. Plays a role in the regulation of cell morphology and cytoskeletal organization. Required in the cortical actin filament dynamics. The polypeptide is Formin-like protein 2 (Bos taurus (Bovine)).